Reading from the N-terminus, the 501-residue chain is O-phosphoseryl-tRNA(Sec) selenium transferase (501 aa).

A tetramerization region spans residues 1-44 (MNRESFAAGERLVSPAYVRQGCEARRSHEHLIRLLLEKGKCPEN). Ser14 is modified (phosphoserine). Residue Arg75 participates in pyridoxal 5'-phosphate binding. Residues 96 to 106 (GRSGDISAVQP) are phosphate loop (P-loop). Residues Arg97, Ser98, and Gln105 each coordinate substrate. Arg271 contacts tRNA. The residue at position 284 (Lys284) is an N6-(pyridoxal phosphate)lysine. Arg313 lines the substrate pocket. TRNA-binding residues include Arg398 and Lys463. The SLA/LP epitope stretch occupies residues 474–493 (DKTEDVDIEEMALKLDNVLL).

Belongs to the SepSecS family. As to quaternary structure, homotetramer formed by a catalytic dimer and a non-catalytic dimer serving as a binding platform that orients tRNASec for catalysis. Each tetramer binds the CCA ends of two tRNAs which point to the active sites of the catalytic dimer. Pyridoxal 5'-phosphate is required as a cofactor. In terms of tissue distribution, primarily expressed in liver, pancreas, kidney and lung. Overexpressed in PHA-stimulated T-cells.

The protein localises to the cytoplasm. The enzyme catalyses O-phospho-L-seryl-tRNA(Sec) + selenophosphate + H2O = L-selenocysteinyl-tRNA(Sec) + 2 phosphate. It participates in aminoacyl-tRNA biosynthesis; selenocysteinyl-tRNA(Sec) biosynthesis; selenocysteinyl-tRNA(Sec) from L-seryl-tRNA(Sec) (archaeal/eukaryal route): step 2/2. Its function is as follows. Converts O-phosphoseryl-tRNA(Sec) to selenocysteinyl-tRNA(Sec) required for selenoprotein biosynthesis. This is O-phosphoseryl-tRNA(Sec) selenium transferase (SEPSECS) from Homo sapiens (Human).